A 405-amino-acid polypeptide reads, in one-letter code: Corticosteroid-binding globulin (405 aa).

An N-terminal signal peptide occupies residues 1 to 22; it reads MPLLLYTCLLWLSTSGLWTVQA. Asn26, Asn31, Asn96, and Asn260 each carry an N-linked (GlcNAc...) asparagine glycan. Residue Asn286 participates in cortisol binding. N-linked (GlcNAc...) asparagine glycosylation is found at Asn330 and Asn369. Trp393 contacts cortisol.

The protein belongs to the serpin family. As to expression, expressed by the liver; secreted in plasma.

Its subcellular location is the secreted. Its function is as follows. Major transport protein for glucocorticoids and progestins in the blood of almost all vertebrate species. This chain is Corticosteroid-binding globulin (SERPINA6), found in Pongo abelii (Sumatran orangutan).